Consider the following 444-residue polypeptide: Chitinase-like protein Idgf1 (444 aa).

A signal peptide spans 1-20; the sequence is MTSLLFVILNIILTLHLCAG. Residues 29–444 form the GH18 domain; the sequence is KRLICYYDAQ…PILRSVRGHL (416 aa). A disulfide bridge links cysteine 33 with cysteine 60. 3 N-linked (GlcNAc...) asparagine glycosylation sites follow: asparagine 213, asparagine 225, and asparagine 335. A disulfide bridge connects residues cysteine 346 and cysteine 429.

It belongs to the glycosyl hydrolase 18 family. IDGF subfamily. Glycosylated.

It localises to the secreted. Its function is as follows. Cooperates with insulin-like peptides to stimulate the proliferation, polarization and motility of imaginal disk cells. May act by stabilizing the binding of insulin-like peptides to its receptor through a simultaneous interaction with both molecules to form a multiprotein signaling complex. This is Chitinase-like protein Idgf1 (Idgf1) from Glossina morsitans morsitans (Savannah tsetse fly).